The following is an 81-amino-acid chain: U6-theraphotoxin-Hs1a (81 aa).

Residues 1–21 form the signal peptide; that stretch reads MKASMFLALAGLVLLFVVCYA. The propeptide occupies 22-48; that stretch reads SESEEKEFPRELLSTIFAVDDFKGEER. 2 cysteine pairs are disulfide-bonded: Cys50–Cys65 and Cys57–Cys70.

This sequence belongs to the neurotoxin 10 (Hwtx-1) family. 51 (Hntx-8) subfamily. As to expression, expressed by the venom gland.

The protein localises to the secreted. Functionally, binds to the nicotinic acetylcholine receptor. Blocks neuromuscular transmission. The protein is U6-theraphotoxin-Hs1a of Cyriopagopus schmidti (Chinese bird spider).